Here is a 191-residue protein sequence, read N- to C-terminus: MGLEAVLEEIREKGRKEADAIRAESKMDSDRILAEADQKVAGIKAEAEEASTKQAARVTAQEISAANLLVKREILNTQKGLLDEVYEGTIAEIAKLPESFHREAIKKLLTEAKKEIPKGKIHCNARDEAAAKAVLAEKEFSGFILGEPAHIDGGILIEGEGGELQIDYSYRTFMNKVWESGLKDASDILFG.

It belongs to the V-ATPase E subunit family. As to quaternary structure, has multiple subunits with at least A(3), B(3), C, D, E, F, H, I and proteolipid K(x).

It localises to the cell membrane. Its function is as follows. Component of the A-type ATP synthase that produces ATP from ADP in the presence of a proton gradient across the membrane. This chain is A-type ATP synthase subunit E, found in Methanoregula boonei (strain DSM 21154 / JCM 14090 / 6A8).